A 747-amino-acid polypeptide reads, in one-letter code: Polyribonucleotide nucleotidyltransferase (747 aa).

Mg(2+) is bound by residues Asp502 and Asp508. One can recognise a KH domain in the interval 569-628 (PRMLTITIDPDKIRDIIGPGGKIIKKIIEETGVEIDVEDDGRVFIASTDAAAGERALKII). Positions 638 to 712 (GKVYNGKVTR…PQGRLKLSRK (75 aa)) constitute an S1 motif domain. Positions 718–747 (STVGEGGHRHFRRAGREGGHRGLNNRRQSR) are disordered.

Belongs to the polyribonucleotide nucleotidyltransferase family. Requires Mg(2+) as cofactor.

The protein localises to the cytoplasm. The catalysed reaction is RNA(n+1) + phosphate = RNA(n) + a ribonucleoside 5'-diphosphate. In terms of biological role, involved in mRNA degradation. Catalyzes the phosphorolysis of single-stranded polyribonucleotides processively in the 3'- to 5'-direction. The polypeptide is Polyribonucleotide nucleotidyltransferase (Moorella thermoacetica (strain ATCC 39073 / JCM 9320)).